The primary structure comprises 247 residues: Adiponectin (247 aa).

Positions 1–17 are cleaved as a signal peptide; the sequence is MLLLQALLFLLILPSHA. 2 O-linked (GalNAc...) threonine glycosylation sites follow: T23 and T24. K36 carries the post-translational modification 5-hydroxylysine. C39 is modified (S-(2-succinyl)cysteine). A disordered region spans residues 44–105; it reads AGIPGHPGHN…GFPGTPGRKG (62 aa). The Collagen-like domain maps to 45–110; the sequence is GIPGHPGHNG…PGRKGEPGEA (66 aa). 4-hydroxyproline is present on residues P47, P50, and P56. Residues 58-73 are compositionally biased toward basic and acidic residues; it reads RDGRDGTPGEKGEKGD. K68, K71, and K80 each carry 5-hydroxylysine; alternate. Residues K68, K71, and K80 are each glycosylated (O-linked (Gal...) hydroxylysine; alternate). A 4-hydroxyproline modification is found at P94. K104 bears the 5-hydroxylysine; alternate mark. K104 is a glycosylation site (O-linked (Gal...) hydroxylysine; alternate). The region spanning 111-247 is the C1q domain; that stretch reads AYVYRSAFSV…TGFLLYHDTN (137 aa).

In terms of assembly, homomultimer. Forms trimers, hexamers and 12- to 18-mers. The trimers (low molecular weight complexes / LMW) are assembled via non-covalent interactions of the collagen-like domains in a triple helix and hydrophobic interactions within the globular C1q domain. Several trimers can associate to form disulfide-linked hexamers (middle molecular weight complexes / MMW) and larger complexes (higher molecular weight / HMW). The HMW-complex assembly is also modulated by the degree of lysine hydroxylation and glycosylation. LMW, MMW and HMW complexes bind to HBEGF, MMW and HMW complexes bind to PDGFB, and HMW complex binds to FGF2. Interacts with CTRP9 via the C1q domain (heterotrimeric complex). In terms of processing, HMW complexes are more extensively glycosylated than smaller oligomers. Hydroxylation and glycosylation of the lysine residues within the collagen-like domain of adiponectin seem to be critically involved in regulating the formation and/or secretion of HMW complexes and consequently contribute to the insulin-sensitizing activity of adiponectin in hepatocytes. Post-translationally, O-glycosylated. Not N-glycosylated O-linked glycans on hydroxylysine residues consist of Glc-Gal disaccharides bound to the oxygen atom of post-translationally added hydroxyl groups. O-linked glycosylation in the N-terminal is disialylated with the structure Neu5Acalpha2-&gt;8Neu5Acalpha2-&gt;3Gal. Sialylated by alpha 2,8-sialyltransferase III. Succination of Cys-39 by the Krebs cycle intermediate fumarate, which leads to S-(2-succinyl)cysteine residues, inhibits polymerization and secretion of adiponectin. Adiponectin is a major target for succination in both adipocytes and adipose tissue of diabetic mice. It was proposed that succination of proteins is a biomarker of mitochondrial stress and accumulation of Krebs cycle intermediates in adipose tissue in diabetes and that succination of adiponectin may contribute to the decrease in plasma adiponectin in diabetes. As to expression, synthesized exclusively by adipocytes and secreted into plasma.

The protein resides in the secreted. With respect to regulation, polymerization and secretion of adiponectin is inhibited by succination of cysteine residues by the Krebs cycle intermediate fumarate, which leads to S-(2-succinyl)cysteine residues. Functionally, important adipokine involved in the control of fat metabolism and insulin sensitivity, with direct anti-diabetic, anti-atherogenic and anti-inflammatory activities. Stimulates AMPK phosphorylation and activation in the liver and the skeletal muscle, enhancing glucose utilization and fatty-acid combustion. Antagonizes TNF-alpha by negatively regulating its expression in various tissues such as liver and macrophages, and also by counteracting its effects. Inhibits endothelial NF-kappa-B signaling through a cAMP-dependent pathway. May play a role in cell growth, angiogenesis and tissue remodeling by binding and sequestering various growth factors with distinct binding affinities, depending on the type of complex, LMW, MMW or HMW. The protein is Adiponectin (Adipoq) of Mus musculus (Mouse).